A 1342-amino-acid polypeptide reads, in one-letter code: WD repeat-containing protein 19 (1342 aa).

WD repeat units lie at residues 11 to 51 (TWLG…RSEI), 52 to 92 (NLPG…TSQL), 95 to 134 (GMRD…KIPV), 137 to 175 (KHTK…IRQT), 273 to 311 (NHKD…DMYV), and 317 to 356 (EENK…LGDA). TPR repeat units follow at residues 736–769 (AQDL…AKHL), 775–808 (PFIS…DNKE), 840–873 (RVLK…DKAA), 895–928 (PKIH…QSVI), 951–984 (LDGA…NEAF), and 1020–1053 (EKRY…EDNV).

Component of the IFT complex A (IFT-A) complex. IFT-A complex is divided into a core subcomplex composed of IFT122:IFT140:WDR19 which is associated with TULP3 and a peripheral subcomplex composed of IFT43:WDR35:TTC21B. Interacts (via C-terminal region) with IFT122 (via C-terminal region). Interacts with BBS1. Interacts with TTC25. In terms of tissue distribution, some isoforms are tissue-specific. Highly expressed in the prostate. Lower expression in the cerebellum, pituitary gland, fetal lung, and pancreas. In normal prostate, expressed in both basal and luminal epithelial cells. No expression detected in fibromuscular stromal cells, endothelial cells, or infiltrating lymphocytes. Uniformed expression in prostate adenocarcinoma cells.

The protein resides in the cell projection. Its subcellular location is the cilium. It localises to the cytoplasm. It is found in the cytoskeleton. The protein localises to the cilium basal body. The protein resides in the photoreceptor outer segment. Its subcellular location is the flagellum. In terms of biological role, as component of the IFT complex A (IFT-A), a complex required for retrograde ciliary transport and entry into cilia of G protein-coupled receptors (GPCRs), it is involved in cilia function and/or assembly. Essential for functional IFT-A assembly and ciliary entry of GPCRs. Associates with the BBSome complex to mediate ciliary transport. In Homo sapiens (Human), this protein is WD repeat-containing protein 19.